Here is a 340-residue protein sequence, read N- to C-terminus: Heat-inducible transcription repressor HrcA (340 aa).

Belongs to the HrcA family.

Its function is as follows. Negative regulator of class I heat shock genes (grpE-dnaK-dnaJ and groELS operons). Prevents heat-shock induction of these operons. This Burkholderia cenocepacia (strain ATCC BAA-245 / DSM 16553 / LMG 16656 / NCTC 13227 / J2315 / CF5610) (Burkholderia cepacia (strain J2315)) protein is Heat-inducible transcription repressor HrcA.